The primary structure comprises 364 residues: tRNA 2-selenouridine synthase (364 aa).

The region spanning 14-137 is the Rhodanese domain; sequence LIADTPIIDV…LRQTAIQATI (124 aa). C97 functions as the S-selanylcysteine intermediate in the catalytic mechanism.

The protein belongs to the SelU family. As to quaternary structure, monomer.

It carries out the reaction 5-methylaminomethyl-2-thiouridine(34) in tRNA + selenophosphate + (2E)-geranyl diphosphate + H2O + H(+) = 5-methylaminomethyl-2-selenouridine(34) in tRNA + (2E)-thiogeraniol + phosphate + diphosphate. It catalyses the reaction 5-methylaminomethyl-2-thiouridine(34) in tRNA + (2E)-geranyl diphosphate = 5-methylaminomethyl-S-(2E)-geranyl-thiouridine(34) in tRNA + diphosphate. The enzyme catalyses 5-methylaminomethyl-S-(2E)-geranyl-thiouridine(34) in tRNA + selenophosphate + H(+) = 5-methylaminomethyl-2-(Se-phospho)selenouridine(34) in tRNA + (2E)-thiogeraniol. The catalysed reaction is 5-methylaminomethyl-2-(Se-phospho)selenouridine(34) in tRNA + H2O = 5-methylaminomethyl-2-selenouridine(34) in tRNA + phosphate. Its function is as follows. Involved in the post-transcriptional modification of the uridine at the wobble position (U34) of tRNA(Lys), tRNA(Glu) and tRNA(Gln). Catalyzes the conversion of 2-thiouridine (S2U-RNA) to 2-selenouridine (Se2U-RNA). Acts in a two-step process involving geranylation of 2-thiouridine (S2U) to S-geranyl-2-thiouridine (geS2U) and subsequent selenation of the latter derivative to 2-selenouridine (Se2U) in the tRNA chain. This Shigella boydii serotype 18 (strain CDC 3083-94 / BS512) protein is tRNA 2-selenouridine synthase.